Here is a 436-residue protein sequence, read N- to C-terminus: DNA primase DnaG (436 aa).

The 75-residue stretch at 169–243 (DSIIVVEGRA…DIDYVARAPY (75 aa)) folds into the Toprim domain. Mg(2+) is bound by residues Glu175, Asp217, and Asp219.

The protein belongs to the archaeal DnaG primase family. As to quaternary structure, forms a ternary complex with MCM helicase and DNA. It depends on Mg(2+) as a cofactor.

The enzyme catalyses ssDNA + n NTP = ssDNA/pppN(pN)n-1 hybrid + (n-1) diphosphate.. Functionally, RNA polymerase that catalyzes the synthesis of short RNA molecules used as primers for DNA polymerase during DNA replication. The chain is DNA primase DnaG from Methanococcus maripaludis (strain DSM 14266 / JCM 13030 / NBRC 101832 / S2 / LL).